Reading from the N-terminus, the 224-residue chain is uncharacterized protein (224 aa).

Over residues 44–139 the composition is skewed to pro residues; sequence TSPPIVPLPT…PSPPPSPSPL (96 aa). Residues 44–145 form a disordered region; the sequence is TSPPIVPLPT…PSPLGEPMYY (102 aa).

This is an uncharacterized protein from Lepidoptera (butterflies and moths).